A 294-amino-acid polypeptide reads, in one-letter code: Putative deoxyribonuclease TATDN3 (294 aa).

Positions 9, 11, 104, 144, 167, and 215 each coordinate Zn(2+).

This sequence belongs to the metallo-dependent hydrolases superfamily. TatD-type hydrolase family. Mn(2+) is required as a cofactor. The cofactor is Ca(2+). Mg(2+) serves as cofactor. Requires Zn(2+) as cofactor.

It is found in the nucleus. The 3'-exonuclease activity is sensitive to the metal ion present in the active site, whereas the AP endodeoxyribonuclease activity is observed in a variety of divalent metal cofactors. 3'-exoxonuclease activity is suppressed in the presence of Ca(2+), Zn(2+) and Ni(2+). In terms of biological role, exhibits 3'-exonuclease activities and apurinic/apyrimidinic (AP) endonuclease (in vitro). Show preferential AP endonuclease activity on double-stranded DNA substrates and 3'- exonuclease activity on single-stranded DNA. The protein is Putative deoxyribonuclease TATDN3 (Tatdn3) of Mus musculus (Mouse).